Here is a 176-residue protein sequence, read N- to C-terminus: HTH-type transcriptional regulator DctR (176 aa).

The region spanning 109-174 (VPEAAVSLSR…ELVRHQHIDY (66 aa)) is the HTH luxR-type domain. A DNA-binding region (H-T-H motif) is located at residues 133–152 (TEDILEKLKISLKTFYCHKH).

May act as a transcriptional regulator of dctA. The sequence is that of HTH-type transcriptional regulator DctR (dctR) from Escherichia coli (strain K12).